We begin with the raw amino-acid sequence, 1617 residues long: Mitogen-activated protein kinase kinae kinase bck1 (1617 aa).

Disordered stretches follow at residues 1–73 (MDGQ…SQLQ), 167–199 (GPVHHLYESSGGDGSAYKRDGTVPPTPSARTMP), 211–253 (SVAS…GGMS), 345–399 (RQIH…SPNL), 455–555 (DHRR…SSSY), 568–633 (KRSK…LRGK), 739–820 (GVPL…ISPE), 832–1144 (EHKR…RGDI), and 1164–1277 (DIDL…EILR). Positions 19 to 28 (TQPSQSHMLS) are enriched in low complexity. Positions 44-60 (VMPPPPPGPPPGPPPGP) are enriched in pro residues. Over residues 220-248 (TAQNHQSQTGQTNEPTKSPSHRQNNSNTL) the composition is skewed to polar residues. Over residues 482-504 (KSGSPATQHATLNQGLSSSSTGD) the composition is skewed to polar residues. Positions 524–533 (RYYESRKGQE) are enriched in basic and acidic residues. 2 stretches are compositionally biased toward polar residues: residues 535 to 555 (IRPSPQEMCSRQWTGETSSSY) and 586 to 596 (ESPTSPVNLRQ). Basic and acidic residues-rich tracts occupy residues 832–841 (EHKREVERKQ) and 871–885 (FDERRVSPYEDKKAD). 2 stretches are compositionally biased toward polar residues: residues 897-907 (PQESYTLTRIN) and 956-980 (GGKQTNFGSFGSPTQGNTKSAPQSS). Composition is skewed to basic and acidic residues over residues 1128-1140 (EDERPPPRRDSFA) and 1189-1198 (PENDLHKKEN). 2 stretches are compositionally biased toward polar residues: residues 1199-1208 (QPSSSYTGEM) and 1257-1272 (NQASRSRSIHTGNQKS). Positions 1323 to 1596 (IIRGQLIGKG…QTLLTRHPFC (274 aa)) constitute a Protein kinase domain. ATP-binding positions include 1329 to 1337 (IGKGTYGRV) and Lys1352. Catalysis depends on Asp1453, which acts as the Proton acceptor.

Belongs to the protein kinase superfamily. STE Ser/Thr protein kinase family. MAP kinase kinase subfamily.

The catalysed reaction is L-seryl-[protein] + ATP = O-phospho-L-seryl-[protein] + ADP + H(+). The enzyme catalyses L-threonyl-[protein] + ATP = O-phospho-L-threonyl-[protein] + ADP + H(+). Mitogen-activated kinase kinase kinase (MAPKKK), part of the cell wall integrity (CWI) signaling pathway composed by three protein kinases bck1, mkk2 and mpkA and responsible for the maintaining of cell-wall integrity balance. The CWI pathway also regulates the oxidative stress response, as well as the production of some secondary metabolites including pyomelanin. The chain is Mitogen-activated protein kinase kinae kinase bck1 from Aspergillus fumigatus (strain CBS 144.89 / FGSC A1163 / CEA10) (Neosartorya fumigata).